Reading from the N-terminus, the 768-residue chain is Probable LRR receptor-like serine/threonine-protein kinase At4g37250 (768 aa).

Residues 1–21 (MRMELISVIFFFFCSVLSSSA) form the signal peptide. Topologically, residues 22–328 (LNSDGLVLMK…PNPRTGLRPG (307 aa)) are extracellular. A glycan (N-linked (GlcNAc...) asparagine) is linked at N64. LRR repeat units lie at residues 67–90 (KVLT…GSLL), 91–112 (TLQS…SFFN), 115–137 (ELRF…IGDL), 139–162 (NLLT…ASLR), 163–183 (NLTV…GGWR), 184–206 (VVEF…FGGY), 207–229 (SLQY…IGVN), and 232–254 (RNVT…PVFL). N99 carries N-linked (GlcNAc...) asparagine glycosylation. N-linked (GlcNAc...) asparagine glycosylation is found at N144, N163, N196, N212, N233, and N242. Positions 301 to 324 (PNTIGSNPVTDPNSQQTDPNPRTG) are disordered. Residues 303 to 320 (TIGSNPVTDPNSQQTDPN) show a composition bias toward polar residues. Residues 329–349 (VIIGIVVGDIAGIGILAVIFL) traverse the membrane as a helical segment. Residues 350 to 768 (YIYRCKKNKI…IKSSSFHYGH (419 aa)) lie on the Cytoplasmic side of the membrane. A disordered region spans residues 361 to 432 (DNNNNDKQRT…NANQRSGDNK (72 aa)). Residues 378–387 (STFSSSSSSP) show a composition bias toward low complexity. Acidic residues predominate over residues 407 to 420 (PSEEEDEDDEDEES). Residues 449–756 (KASAYILGAT…AVLERFHPNS (308 aa)) form the Protein kinase domain. Phosphoserine occurs at positions 451 and 531. The residue at position 553 (T553) is a Phosphothreonine. S662 bears the Phosphoserine mark.

This sequence belongs to the protein kinase superfamily. Ser/Thr protein kinase family.

It localises to the membrane. It catalyses the reaction L-seryl-[protein] + ATP = O-phospho-L-seryl-[protein] + ADP + H(+). It carries out the reaction L-threonyl-[protein] + ATP = O-phospho-L-threonyl-[protein] + ADP + H(+). The sequence is that of Probable LRR receptor-like serine/threonine-protein kinase At4g37250 from Arabidopsis thaliana (Mouse-ear cress).